The primary structure comprises 525 residues: Lymphocyte activation gene 3 protein (525 aa).

An N-terminal signal peptide occupies residues 1–22 (MWEAQFLGLLFLQPLWVAPVKP). Over 23-450 (LQPGAEVPVV…APGALPAGHL (428 aa)) the chain is Extracellular. The 131-residue stretch at 37 to 167 (GAPAQLPCSP…LSCRLRLRLG (131 aa)) folds into the Ig-like V-type domain. Residues 37-252 (GAPAQLPCSP…LTYRDGFNVS (216 aa)) are interaction with FGL1. Cys-44 and Cys-160 are oxidised to a cystine. A disordered region spans residues 62 to 97 (TWQHQPDSGPPAAAPGHPLAPGPHPAAPSSWGPRPR). Residues 69–87 (SGPPAAAPGHPLAPGPHPA) are compositionally biased toward pro residues. An Ig-like C2-type 1 domain is found at 168–252 (QASMTASPPG…LTYRDGFNVS (85 aa)). Residue Asn-188 is glycosylated (N-linked (GlcNAc...) asparagine). An intrachain disulfide couples Cys-189 to Cys-241. N-linked (GlcNAc...) asparagine glycosylation is found at Asn-250 and Asn-256. Ig-like C2-type domains follow at residues 265–343 (PTPL…QQLN) and 348–419 (LAII…QGER). Cys-282 and Cys-333 are oxidised to a cystine. N-linked (GlcNAc...) asparagine glycosylation is present at Asn-343. A disulfide bridge links Cys-369 with Cys-412. Residues 429-450 (ELSSPGAQRSGRAPGALPAGHL) are connecting peptide. The chain crosses the membrane as a helical span at residues 451-471 (LLFLILGVLSLLLLVTGAFGF). Residues 472-525 (HLWRRQWRPRRFSALEQGIHPPQAQSKIEELEQEPEPEPEPEPEPEPEPEPEQL) are Cytoplasmic-facing. The disordered stretch occupies residues 487 to 525 (EQGIHPPQAQSKIEELEQEPEPEPEPEPEPEPEPEPEQL). A KIEELE motif motif is present at residues 498–503 (KIEELE). A 12 X 2 AA tandem repeats of E-X region spans residues 501–524 (ELEQEPEPEPEPEPEPEPEPEPEQ). The segment covering 502-525 (LEQEPEPEPEPEPEPEPEPEPEQL) has biased composition (acidic residues).

Belongs to the LAG3 family. In terms of assembly, interacts with MHC class II (MHC-II); selectively recognizes stable complexes of peptide and MHC-II. Interacts with FGL1 (via the Fibrinogen C-terminal domain). In terms of processing, proteolytically cleaved by ADAM10 and ADAM17 within the connecting peptide region, leading to release of Secreted lymphocyte activation gene 3 protein (sLAG-3). ADAM10 mediates constitutive cleavage, but cleavage increases following T-cell activation, whereas shedding by ADAM17 is induced by TCR signaling in a PRKCQ-dependent manner. In terms of tissue distribution, primarily expressed in activated T-cells and a subset of natural killer (NK) cells.

The protein localises to the cell membrane. Its subcellular location is the secreted. Lymphocyte activation gene 3 protein: Inhibitory receptor on antigen activated T-cells. Delivers inhibitory signals upon binding to ligands, such as FGL1. FGL1 constitutes a major ligand of LAG3 and is responsible for LAG3 T-cell inhibitory function. Following TCR engagement, LAG3 associates with CD3-TCR in the immunological synapse and directly inhibits T-cell activation. May inhibit antigen-specific T-cell activation in synergy with PDCD1/PD-1, possibly by acting as a coreceptor for PDCD1/PD-1. Negatively regulates the proliferation, activation, effector function and homeostasis of both CD8(+) and CD4(+) T-cells. Also mediates immune tolerance: constitutively expressed on a subset of regulatory T-cells (Tregs) and contributes to their suppressive function. Also acts as a negative regulator of plasmacytoid dendritic cell (pDCs) activation. Binds MHC class II (MHC-II); the precise role of MHC-II-binding is however unclear. In terms of biological role, may function as a ligand for MHC class II (MHC-II) on antigen-presenting cells (APC), promoting APC activation/maturation and driving Th1 immune response. This is Lymphocyte activation gene 3 protein from Homo sapiens (Human).